Here is a 226-residue protein sequence, read N- to C-terminus: NADH-quinone oxidoreductase subunit C (226 aa).

The tract at residues Met-1–Gly-21 is disordered.

This sequence belongs to the complex I 30 kDa subunit family. NDH-1 is composed of 14 different subunits. Subunits NuoB, C, D, E, F, and G constitute the peripheral sector of the complex.

The protein resides in the cell membrane. The catalysed reaction is a quinone + NADH + 5 H(+)(in) = a quinol + NAD(+) + 4 H(+)(out). NDH-1 shuttles electrons from NADH, via FMN and iron-sulfur (Fe-S) centers, to quinones in the respiratory chain. The immediate electron acceptor for the enzyme in this species is believed to be a menaquinone. Couples the redox reaction to proton translocation (for every two electrons transferred, four hydrogen ions are translocated across the cytoplasmic membrane), and thus conserves the redox energy in a proton gradient. The chain is NADH-quinone oxidoreductase subunit C from Mycolicibacterium gilvum (strain PYR-GCK) (Mycobacterium gilvum (strain PYR-GCK)).